The primary structure comprises 197 residues: Molybdenum cofactor guanylyltransferase (197 aa).

Residues 10 to 12, Lys23, Asn51, Asp69, and Asp99 each bind GTP; that span reads LAG. Residue Asp99 participates in Mg(2+) binding.

This sequence belongs to the MobA family. As to quaternary structure, monomer. It depends on Mg(2+) as a cofactor.

It is found in the cytoplasm. It carries out the reaction Mo-molybdopterin + GTP + H(+) = Mo-molybdopterin guanine dinucleotide + diphosphate. Functionally, transfers a GMP moiety from GTP to Mo-molybdopterin (Mo-MPT) cofactor (Moco or molybdenum cofactor) to form Mo-molybdopterin guanine dinucleotide (Mo-MGD) cofactor. The polypeptide is Molybdenum cofactor guanylyltransferase (Shewanella sp. (strain ANA-3)).